The chain runs to 490 residues: Glutathione reductase (490 aa).

Residues serine 19 and glycine 20 each coordinate FAD. Serine 19 serves as a coordination point for glutathione. A glutathione-binding site is contributed by arginine 26. FAD is bound by residues glutamate 39, threonine 48, cysteine 49, and lysine 57. Cysteine 49 and cysteine 54 are oxidised to a cystine. Tyrosine 110 is a glutathione binding site. FAD is bound at residue alanine 126. Residues alanine 208, isoleucine 211, glutamate 214, arginine 231, and arginine 237 each coordinate NADP(+). Serine 246 lines the glutathione pocket. NADP(+) is bound at residue glycine 297. Aspartate 337 contacts FAD. NADP(+) is bound at residue glutamate 343. Threonine 345 contacts FAD. Arginine 353 provides a ligand contact to glutathione. Residue valine 379 coordinates NADP(+). Lysine 432 provides a ligand contact to glutathione. Position 479 (histidine 479) interacts with FAD. The Proton acceptor role is filled by histidine 479.

This sequence belongs to the class-I pyridine nucleotide-disulfide oxidoreductase family. As to quaternary structure, homodimer. The cofactor is FAD.

It is found in the cytoplasm. The protein localises to the mitochondrion. The catalysed reaction is 2 glutathione + NADP(+) = glutathione disulfide + NADPH + H(+). Catalyzes the reduction of glutathione disulfide (GSSG) to reduced glutathione (GSH). Constitutes the major mechanism to maintain a high GSH:GSSG ratio in the cytosol. In Debaryomyces hansenii (strain ATCC 36239 / CBS 767 / BCRC 21394 / JCM 1990 / NBRC 0083 / IGC 2968) (Yeast), this protein is Glutathione reductase (GLR1).